A 35-amino-acid chain; its full sequence is Cupiennin-1c (35 aa).

Glutamate 35 bears the Glutamic acid 1-amide mark.

Expressed by the venom gland.

It is found in the secreted. Has antimicrobial activity against E.coli, E.faecalis, P.aeruginosa, and S.aureus. The polypeptide is Cupiennin-1c (Cupiennius salei (American wandering spider)).